A 543-amino-acid polypeptide reads, in one-letter code: Carboxypeptidase Y homolog A (543 aa).

The N-terminal stretch at 1–17 (MKLLTTGLLASAALVAA) is a signal peptide. A propeptide spanning residues 18–124 (QEQQVLRADE…KLKNYDLRVK (107 aa)) is cleaved from the precursor. Cystine bridges form between cysteine 179/cysteine 419, cysteine 313/cysteine 327, cysteine 337/cysteine 360, cysteine 344/cysteine 353, and cysteine 382/cysteine 389. Asparagine 210 carries N-linked (GlcNAc...) asparagine glycosylation. Serine 266 is an active-site residue. Aspartate 458 is a catalytic residue. Asparagine 509 carries an N-linked (GlcNAc...) asparagine glycan. The active site involves histidine 520.

It belongs to the peptidase S10 family.

It is found in the vacuole. The enzyme catalyses Release of a C-terminal amino acid with broad specificity.. Its function is as follows. Vacuolar carboxypeptidase involved in degradation of small peptides. Digests preferentially peptides containing an aliphatic or hydrophobic residue in P1' position, as well as methionine, leucine or phenylalanine in P1 position of ester substrate. In Arthroderma gypseum (strain ATCC MYA-4604 / CBS 118893) (Microsporum gypseum), this protein is Carboxypeptidase Y homolog A (CPYA).